The chain runs to 143 residues: Cytotoxic L-amino-acid oxidase (143 aa).

It belongs to the flavin monoamine oxidase family. It depends on FAD as a cofactor.

The enzyme catalyses an L-alpha-amino acid + O2 + H2O = a 2-oxocarboxylate + H2O2 + NH4(+). In terms of biological role, cytotoxic L-amino acid oxidase with high oxidase activity towards DL-methionine and L-methionine, L-phenylalanine, DL-norleucine, L-isoleucine, L-arginine, L-tyrosine, and DL-leucine. Shows relatively low activity towards DL-lysine and L-lysine, DL-asparagine, DL-valine, L-histidine, DL-threonine, DL-tryptophan, and L-glutamic acid; and no activity towards L-cysteine, L-glycine, L-proline, L-oxyproline, DL-serine, and DL-aspartic acid. Does not use benzylamine, ethanolamine, diethylamine, meta- and para-phenylendiamine, ortho-, meta- and para-aminophenols, or putrescin as a substrate. Acts as a toxin by inducing chromatin condensation, as well as DNA and nucleus fragmentation, which are typical for apoptosis. Probably induces cell damage indirectly via the generation of free radicals and oxidant agents that can trigger cell impairment and apoptosis by a caspase-independent pathway. The polypeptide is Cytotoxic L-amino-acid oxidase (Amanita phalloides (Death cap)).